Here is a 339-residue protein sequence, read N- to C-terminus: DNA-directed RNA polymerase subunit alpha (339 aa).

The segment at 1–233 (MVREEVAGST…DLFLPFLHAE (233 aa)) is alpha N-terminal domain (alpha-NTD). Residues 264-339 (KKGIPLNCIF…IDLLKNKLSF (76 aa)) form an alpha C-terminal domain (alpha-CTD) region.

Belongs to the RNA polymerase alpha chain family. In terms of assembly, in plastids the minimal PEP RNA polymerase catalytic core is composed of four subunits: alpha, beta, beta', and beta''. When a (nuclear-encoded) sigma factor is associated with the core the holoenzyme is formed, which can initiate transcription.

Its subcellular location is the plastid. The protein localises to the chloroplast. The enzyme catalyses RNA(n) + a ribonucleoside 5'-triphosphate = RNA(n+1) + diphosphate. In terms of biological role, DNA-dependent RNA polymerase catalyzes the transcription of DNA into RNA using the four ribonucleoside triphosphates as substrates. The polypeptide is DNA-directed RNA polymerase subunit alpha (Eremopyrum distans).